Here is a 426-residue protein sequence, read N- to C-terminus: D-tagatose-1,6-bisphosphate aldolase subunit KbaZ (426 aa).

It belongs to the GatZ/KbaZ family. KbaZ subfamily. In terms of assembly, forms a complex with KbaY.

It functions in the pathway carbohydrate metabolism; D-tagatose 6-phosphate degradation; D-glyceraldehyde 3-phosphate and glycerone phosphate from D-tagatose 6-phosphate: step 2/2. Functionally, component of the tagatose-1,6-bisphosphate aldolase KbaYZ that is required for full activity and stability of the Y subunit. Could have a chaperone-like function for the proper and stable folding of KbaY. When expressed alone, KbaZ does not show any aldolase activity. This is D-tagatose-1,6-bisphosphate aldolase subunit KbaZ from Escherichia coli O6:H1 (strain CFT073 / ATCC 700928 / UPEC).